The chain runs to 356 residues: Dihydroorotate dehydrogenase (quinone) (356 aa).

FMN contacts are provided by residues 66 to 70 (AGFDK) and Thr90. Lys70 is a binding site for substrate. 115-119 (NRMGF) contributes to the substrate binding site. The FMN site is built by Asn143 and Asn176. Asn176 contributes to the substrate binding site. The active-site Nucleophile is Ser179. Position 181 (Asn181) interacts with substrate. Residues Lys212 and Thr240 each contribute to the FMN site. Position 241 to 242 (241 to 242 (NT)) interacts with substrate. Residues Gly264, Gly293, and 314 to 315 (YT) contribute to the FMN site.

It belongs to the dihydroorotate dehydrogenase family. Type 2 subfamily. As to quaternary structure, monomer. FMN serves as cofactor.

The protein localises to the cell membrane. It carries out the reaction (S)-dihydroorotate + a quinone = orotate + a quinol. The protein operates within pyrimidine metabolism; UMP biosynthesis via de novo pathway; orotate from (S)-dihydroorotate (quinone route): step 1/1. Functionally, catalyzes the conversion of dihydroorotate to orotate with quinone as electron acceptor. The protein is Dihydroorotate dehydrogenase (quinone) (pyrD) of Mycobacterium leprae (strain TN).